A 197-amino-acid polypeptide reads, in one-letter code: Adenylate kinase isoenzyme 6 homolog FAP7 (197 aa).

Glycine 17, glycine 19, lysine 20, serine 21, and serine 22 together coordinate ATP. Positions 38 to 61 (NISDFAKDNDCFEGYDEGRKSHIV) are NMPbind. The tract at residues 113-123 (ARGYHDSKIEE) is LID. An ATP-binding site is contributed by arginine 114. A disordered region spans residues 176–197 (PDGVTNEYQGPRSDDEDDEDSE). Phosphotyrosine is present on tyrosine 183. A phosphoserine mark is found at serine 188 and serine 196.

Belongs to the adenylate kinase family. AK6 subfamily. As to quaternary structure, interacts with small ribosomal subunit protein uS11B/RPS14B. Not a structural component of 43S pre-ribosomes, but transiently interacts with them by binding to uS11/RPS14.

It localises to the cytoplasm. The protein resides in the nucleus. The enzyme catalyses AMP + ATP = 2 ADP. It catalyses the reaction ATP + H2O = ADP + phosphate + H(+). Broad-specificity nucleoside monophosphate (NMP) kinase that catalyzes the reversible transfer of the terminal phosphate group between nucleoside triphosphates and monophosphates. Also has ATPase activity. Involved in the late cytoplasmic maturation steps of the 40S ribosomal particles, specifically 18S rRNA maturation. Required for cleavage of the 20S pre-rRNA at site D in the cytoplasm. While NMP activity is not required for ribosome maturation, ATPase activity is. Associates transiently with small ribosomal subunit protein uS11. ATP hydrolysis breaks the interaction with uS11. May temporarily remove uS11 from the ribosome to enable a conformational change of the ribosomal RNA that is needed for the final maturation step of the small ribosomal subunit. Promotes formation of the rotated state in 80S-like ribosomes, a key intermediate in translocation, thereby releasing the essential assembly factor DIM1 from pre-40S subunits. Its NMP activity may have a role in nuclear energy homeostasis. Involved in oxidative stress response. Required for POS9-dependent target gene transcription upon oxidative stress. This is Adenylate kinase isoenzyme 6 homolog FAP7 from Saccharomyces cerevisiae (strain ATCC 204508 / S288c) (Baker's yeast).